Reading from the N-terminus, the 337-residue chain is Phosphoenolpyruvate transferase (337 aa).

D69 contacts 7,8-didemethyl-8-hydroxy-5-deazariboflavin.

Belongs to the CofD family. In terms of assembly, homodimer. The cofactor is Mg(2+).

It carries out the reaction enolpyruvoyl-2-diphospho-5'-guanosine + 7,8-didemethyl-8-hydroxy-5-deazariboflavin = dehydro coenzyme F420-0 + GMP + H(+). It participates in cofactor biosynthesis; coenzyme F420 biosynthesis. Catalyzes the transfer of the phosphoenolpyruvate moiety from enoylpyruvoyl-2-diphospho-5'-guanosine (EPPG) to 7,8-didemethyl-8-hydroxy-5-deazariboflavin (FO) with the formation of dehydro coenzyme F420-0 and GMP. In Mycobacterium avium (strain 104), this protein is Phosphoenolpyruvate transferase.